A 419-amino-acid polypeptide reads, in one-letter code: MDKLTIQASKPLTGSVVISGAKNAALPILMAGVLAETDFVLSNVPELRDVSTSCKLLRCLGAEVDELGGGRIRISTTNLNEFCAPYDLVKTMRASILILGPLLARFGTADVSLPGGCAIGARPVNLHLHGLEQMGAKIEVKEGYIKARVDGRLKGAHIFMDMISVGATENLLMAAALADGITIIENAAQEPEVTDLAHCLIAMGAKITGVGTATLKIEGVERLQGCEYRVMPDRIETGTFLVAAAVTRGRIRCENADPASMEAVLAKLEDAGATVTSGEDWIELDMHGKQPKAVNIKTAPYPAFPTDMQAQFCVLNALAQGTGRVTETIFENRFMHVPELIRMGANMELEGHTCIIQGIDKLNGAQVMATDLRASASLVIAGLMAEGTTLVDRIYHLDRGYEHIESKFQGLGAEVIRVK.

22-23 (KN) contributes to the phosphoenolpyruvate binding site. Residue R93 participates in UDP-N-acetyl-alpha-D-glucosamine binding. C117 functions as the Proton donor in the catalytic mechanism. C117 is modified (2-(S-cysteinyl)pyruvic acid O-phosphothioketal). UDP-N-acetyl-alpha-D-glucosamine-binding residues include D307 and I329.

The protein belongs to the EPSP synthase family. MurA subfamily.

The protein localises to the cytoplasm. It carries out the reaction phosphoenolpyruvate + UDP-N-acetyl-alpha-D-glucosamine = UDP-N-acetyl-3-O-(1-carboxyvinyl)-alpha-D-glucosamine + phosphate. It functions in the pathway cell wall biogenesis; peptidoglycan biosynthesis. Cell wall formation. Adds enolpyruvyl to UDP-N-acetylglucosamine. This Shewanella denitrificans (strain OS217 / ATCC BAA-1090 / DSM 15013) protein is UDP-N-acetylglucosamine 1-carboxyvinyltransferase.